Consider the following 180-residue polypeptide: Putative methyltransferase YrhH (180 aa).

Belongs to the methyltransferase superfamily.

The polypeptide is Putative methyltransferase YrhH (yrhH) (Bacillus subtilis (strain 168)).